A 493-amino-acid chain; its full sequence is 3-octaprenyl-4-hydroxybenzoate carboxy-lyase (493 aa).

A Mn(2+)-binding site is contributed by Asn-172. Prenylated FMN contacts are provided by residues Ile-175–Arg-177, Arg-189–Leu-191, and Arg-194–Gly-195. Glu-238 contacts Mn(2+). Asp-287 serves as the catalytic Proton donor.

It belongs to the UbiD family. As to quaternary structure, homohexamer. Requires prenylated FMN as cofactor. Mn(2+) is required as a cofactor.

It localises to the cell membrane. The catalysed reaction is a 4-hydroxy-3-(all-trans-polyprenyl)benzoate + H(+) = a 2-(all-trans-polyprenyl)phenol + CO2. Its pathway is cofactor biosynthesis; ubiquinone biosynthesis. Its function is as follows. Catalyzes the decarboxylation of 3-octaprenyl-4-hydroxy benzoate to 2-octaprenylphenol, an intermediate step in ubiquinone biosynthesis. The sequence is that of 3-octaprenyl-4-hydroxybenzoate carboxy-lyase from Shewanella frigidimarina (strain NCIMB 400).